Here is an 80-residue protein sequence, read N- to C-terminus: Large ribosomal subunit protein uL24 (80 aa).

It belongs to the universal ribosomal protein uL24 family. As to quaternary structure, part of the 50S ribosomal subunit.

In terms of biological role, one of two assembly initiator proteins, it binds directly to the 5'-end of the 23S rRNA, where it nucleates assembly of the 50S subunit. One of the proteins that surrounds the polypeptide exit tunnel on the outside of the subunit. This chain is Large ribosomal subunit protein uL24, found in Chlorobaculum parvum (strain DSM 263 / NCIMB 8327) (Chlorobium vibrioforme subsp. thiosulfatophilum).